Here is a 273-residue protein sequence, read N- to C-terminus: Mediator of RNA polymerase II transcription subunit 18 (273 aa).

Over residues 90–106 the composition is skewed to low complexity; the sequence is GAQSSAASSGDPDAPMS. Residues 90–114 form a disordered region; the sequence is GAQSSAASSGDPDAPMSGTDTGTNF.

Belongs to the Mediator complex subunit 18 family. As to quaternary structure, component of the Mediator complex.

The protein resides in the nucleus. In terms of biological role, component of the Mediator complex, a coactivator involved in the regulated transcription of nearly all RNA polymerase II-dependent genes. Mediator functions as a bridge to convey information from gene-specific regulatory proteins to the basal RNA polymerase II transcription machinery. Mediator is recruited to promoters by direct interactions with regulatory proteins and serves as a scaffold for the assembly of a functional preinitiation complex with RNA polymerase II and the general transcription factors. The chain is Mediator of RNA polymerase II transcription subunit 18 (srb5) from Aspergillus oryzae (strain ATCC 42149 / RIB 40) (Yellow koji mold).